Consider the following 409-residue polypeptide: Nucleoprotein (409 aa).

Disordered stretches follow at residues 1 to 32, 46 to 68, 164 to 196, and 238 to 258; these read MASG…SSGN, IPPP…SQQH, RSGR…EDDL, and VDQV…DDKM. Residues 15–31 are compositionally biased toward low complexity; the sequence is PVIKLGGPKPPKVGSSG. The RNA-binding stretch occupies residues 29 to 160; it reads SSGNASWFQA…GNFRWDFIPL (132 aa). In terms of domain architecture, CoV N NTD spans 31–156; it reads GNASWFQAIK…GGPDGNFRWD (126 aa). Positions 166–179 are enriched in low complexity; sequence GRSTAASSAASSRA. Composition is skewed to basic and acidic residues over residues 180 to 192 and 247 to 258; these read PSRE…RSGS and KGKEGNFGDDKM. Phosphoserine; by host is present on residues S190 and S192. Residues 215–331 enclose the CoV N CTD domain; the sequence is TKAKADEMAH…QCVDGVGTRP (117 aa). The segment at 226 to 333 is dimerization; it reads RYCKRTIPPN…VDGVGTRPKD (108 aa). C320 and C323 form a disulfide bridge. A disordered region spans residues 326-409; it reads GVGTRPKDDE…GDAALGENEL (84 aa). Positions 358–367 are enriched in basic residues; it reads QRPKKEKKPK. The segment covering 368 to 384 has biased composition (basic and acidic residues); that stretch reads KHDDEVDKALTSDEERN. T378 is modified (phosphothreonine; by host). S379 is modified (phosphoserine; by host).

This sequence belongs to the gammacoronavirus nucleocapsid protein family. In terms of assembly, homooligomer. Both monomeric and oligomeric forms interact with RNA. Interacts with protein M. Interacts with NSP3; this interaction serves to tether the genome to the newly translated replicase-transcriptase complex at a very early stage of infection. ADP-ribosylated. The ADP-ribosylation is retained in the virion during infection. Post-translationally, phosphorylated on serine and threonine residues.

It is found in the virion. Its subcellular location is the host endoplasmic reticulum-Golgi intermediate compartment. The protein resides in the host Golgi apparatus. Packages the positive strand viral genome RNA into a helical ribonucleocapsid (RNP) and plays a fundamental role during virion assembly through its interactions with the viral genome and membrane protein M. Plays an important role in enhancing the efficiency of subgenomic viral RNA transcription as well as viral replication. This is Nucleoprotein from Avian infectious bronchitis virus (strain M41) (IBV).